A 178-amino-acid polypeptide reads, in one-letter code: Protein GrpE (178 aa).

Belongs to the GrpE family. Homodimer.

It is found in the cytoplasm. Its function is as follows. Participates actively in the response to hyperosmotic and heat shock by preventing the aggregation of stress-denatured proteins, in association with DnaK and GrpE. It is the nucleotide exchange factor for DnaK and may function as a thermosensor. Unfolded proteins bind initially to DnaJ; upon interaction with the DnaJ-bound protein, DnaK hydrolyzes its bound ATP, resulting in the formation of a stable complex. GrpE releases ADP from DnaK; ATP binding to DnaK triggers the release of the substrate protein, thus completing the reaction cycle. Several rounds of ATP-dependent interactions between DnaJ, DnaK and GrpE are required for fully efficient folding. This chain is Protein GrpE, found in Rickettsia akari (strain Hartford).